The chain runs to 504 residues: Glycerol kinase (504 aa).

Residue Thr-14 participates in ADP binding. Residues Thr-14, Thr-15, and Ser-16 each contribute to the ATP site. Thr-14 is a sn-glycerol 3-phosphate binding site. Arg-18 serves as a coordination point for ADP. Sn-glycerol 3-phosphate contacts are provided by Arg-84, Glu-85, Tyr-136, and Asp-246. Glycerol-binding residues include Arg-84, Glu-85, Tyr-136, Asp-246, and Gln-247. The ADP site is built by Thr-268 and Gly-311. ATP contacts are provided by Thr-268, Gly-311, Gln-315, and Gly-412. ADP-binding residues include Gly-412 and Asn-416.

Belongs to the FGGY kinase family.

The catalysed reaction is glycerol + ATP = sn-glycerol 3-phosphate + ADP + H(+). The protein operates within polyol metabolism; glycerol degradation via glycerol kinase pathway; sn-glycerol 3-phosphate from glycerol: step 1/1. Its activity is regulated as follows. Inhibited by fructose 1,6-bisphosphate (FBP). Key enzyme in the regulation of glycerol uptake and metabolism. Catalyzes the phosphorylation of glycerol to yield sn-glycerol 3-phosphate. The sequence is that of Glycerol kinase from Aliivibrio salmonicida (strain LFI1238) (Vibrio salmonicida (strain LFI1238)).